Consider the following 96-residue polypeptide: MPDKLVVEVAYALPEKQYLQRVTLEEGATVEEAIRASGLLELRTDIDLAKNKVGIYSRPVKLTDTVQDGDRVEIYRPLIADPKALRRQRAEKSAGR.

This sequence belongs to the UPF0125 (RnfH) family.

In Salmonella agona (strain SL483), this protein is Protein RnfH.